The sequence spans 469 residues: Glutamine synthetase (469 aa).

Residues 15 to 96 (EDVKFIDVRF…INFFIHDPIT (82 aa)) enclose the GS beta-grasp domain. A GS catalytic domain is found at 104-469 (PRNVAKKAEA…PYEYEQYYDV (366 aa)). Mg(2+)-binding residues include E129 and E131. E205 lines the ATP pocket. Mg(2+) contacts are provided by E210 and E218. 221–223 (YKF) serves as a coordination point for ATP. Residues 262-263 (NG) and G263 contribute to the L-glutamate site. H267 is a Mg(2+) binding site. ATP contacts are provided by residues 269–271 (HQS) and S271. 3 residues coordinate L-glutamate: R320, E326, and R338. ATP-binding residues include R338, R343, and K352. E357 lines the Mg(2+) pocket. R359 contacts L-glutamate. An O-AMP-tyrosine modification is found at Y397.

This sequence belongs to the glutamine synthetase family. Oligomer of 12 subunits arranged in the form of two hexagons. Requires Mg(2+) as cofactor.

It localises to the cytoplasm. The enzyme catalyses L-glutamate + NH4(+) + ATP = L-glutamine + ADP + phosphate + H(+). The activity of this enzyme could be controlled by adenylation under conditions of abundant glutamine. Its function is as follows. Catalyzes the ATP-dependent biosynthesis of glutamine from glutamate and ammonia. The sequence is that of Glutamine synthetase from Streptomyces viridochromogenes.